We begin with the raw amino-acid sequence, 582 residues long: Protein bps2 (582 aa).

A28 to T35 lines the ATP pocket. Residues R243–I281 adopt a coiled-coil conformation. The 109-residue stretch at R243–S351 folds into the Zinc-hook domain. C292 and C295 together coordinate Zn(2+). Positions S320–S351 form a coiled coil.

The protein is Protein bps2 (bps2) of Acidianus ambivalens (Desulfurolobus ambivalens).